Consider the following 150-residue polypeptide: Cell division protein SepF (150 aa).

Belongs to the SepF family. In terms of assembly, homodimer. Interacts with FtsZ.

The protein localises to the cytoplasm. Cell division protein that is part of the divisome complex and is recruited early to the Z-ring. Probably stimulates Z-ring formation, perhaps through the cross-linking of FtsZ protofilaments. Its function overlaps with FtsA. This chain is Cell division protein SepF, found in Clostridium botulinum (strain Kyoto / Type A2).